The sequence spans 287 residues: Pirin-1 (287 aa).

N-acetylthreonine is present on threonine 2.

The protein belongs to the pirin family. In terms of assembly, interacts with the G protein alpha-1 subunit GPA1. Interacts with NFYB6 and NFYB9.

It localises to the nucleus. In terms of biological role, involved in abscisic acid signal transduction. Plays a role in seed germination and early seedling development. Involved in the blue light (BL) signaling. This Arabidopsis thaliana (Mouse-ear cress) protein is Pirin-1 (PRN1).